The primary structure comprises 131 residues: Peptide methionine sulfoxide reductase MsrB (131 aa).

The MsrB domain maps to 8–130 (LEEWKEMLDP…NSVCLDLVPR (123 aa)). Zn(2+) contacts are provided by C47, C50, C96, and C99. C119 (nucleophile) is an active-site residue.

Belongs to the MsrB Met sulfoxide reductase family. Zn(2+) is required as a cofactor.

The catalysed reaction is L-methionyl-[protein] + [thioredoxin]-disulfide + H2O = L-methionyl-(R)-S-oxide-[protein] + [thioredoxin]-dithiol. The chain is Peptide methionine sulfoxide reductase MsrB from Pseudomonas savastanoi pv. phaseolicola (strain 1448A / Race 6) (Pseudomonas syringae pv. phaseolicola (strain 1448A / Race 6)).